The chain runs to 492 residues: UPF0236 protein TTE0402 (492 aa).

The protein belongs to the UPF0236 family.

The polypeptide is UPF0236 protein TTE0402 (Caldanaerobacter subterraneus subsp. tengcongensis (strain DSM 15242 / JCM 11007 / NBRC 100824 / MB4) (Thermoanaerobacter tengcongensis)).